The chain runs to 117 residues: V-type proton ATPase subunit G (117 aa).

This sequence belongs to the V-ATPase G subunit family. In terms of assembly, V-ATPase is a heteromultimeric enzyme made up of two complexes: the ATP-hydrolytic V1 complex and the proton translocation V0 complex. The V1 complex consists of three catalytic AB heterodimers that form a heterohexamer, three peripheral stalks each consisting of EG heterodimers, one central rotor including subunits D and F, and the regulatory subunits C and H. The proton translocation complex V0 consists of the proton transport subunit a, a ring of proteolipid subunits c9c'', rotary subunit d, subunits e and f, and the accessory subunits VhaAC45 and ATP6AP2.

In terms of biological role, subunit of the V1 complex of vacuolar(H+)-ATPase (V-ATPase), a multisubunit enzyme composed of a peripheral complex (V1) that hydrolyzes ATP and a membrane integral complex (V0) that translocates protons. V-ATPase is responsible for acidifying and maintaining the pH of intracellular compartments and in some cell types, is targeted to the plasma membrane, where it is responsible for acidifying the extracellular environment. In enterocytes, acts as part of a pHCl-2 sensory pathway which mediates Tor-dependent larval growth and metabolism in response to zinc availability. Likely acts in maintaining enterocyte lysosomal acidification which consequently promotes Tor activation at the lysosome membrane. This chain is V-type proton ATPase subunit G (Vha13), found in Drosophila melanogaster (Fruit fly).